The chain runs to 209 residues: Transmembrane emp24 domain-containing protein B (209 aa).

The N-terminal stretch at 1–24 (MNKTNQLINICILVTLFLIGSSSA) is a signal peptide. The Lumenal segment spans residues 25–174 (LTLQVEPKSQ…RDTSESTNAR (150 aa)). A GOLD domain is found at 34–119 (QECFYNFIES…AKVVTFTWAS (86 aa)). Residues 175–195 (VVWWTIAEVIVLVVMGVGQIW) traverse the membrane as a helical segment. The Cytoplasmic segment spans residues 196-209 (YLRKWFDNKSTGRV).

It belongs to the EMP24/GP25L family.

The protein resides in the cytoplasmic vesicle membrane. In terms of biological role, could have a role in the budding of coatomer-coated and other species of coated vesicles. The polypeptide is Transmembrane emp24 domain-containing protein B (empB) (Dictyostelium discoideum (Social amoeba)).